The primary structure comprises 140 residues: uncharacterized protein (140 aa).

A run of 2 helical transmembrane segments spans residues 4 to 21 (ILKI…YLFG) and 26 to 48 (LVKV…SGYL).

This sequence belongs to the bacteriophage holin family. Cp-1 holin subfamily.

Its subcellular location is the cell membrane. This is an uncharacterized protein from Listeria innocua serovar 6a (strain ATCC BAA-680 / CLIP 11262).